Consider the following 860-residue polypeptide: Leucine--tRNA ligase (860 aa).

The 'HIGH' region signature appears at 42 to 52 (PYPSGRLHMGH). The 'KMSKS' region signature appears at 619–623 (KMSKS). Lysine 622 contributes to the ATP binding site.

It belongs to the class-I aminoacyl-tRNA synthetase family.

The protein localises to the cytoplasm. The catalysed reaction is tRNA(Leu) + L-leucine + ATP = L-leucyl-tRNA(Leu) + AMP + diphosphate. In Klebsiella pneumoniae subsp. pneumoniae (strain ATCC 700721 / MGH 78578), this protein is Leucine--tRNA ligase.